A 960-amino-acid chain; its full sequence is Glycine dehydrogenase (decarboxylating) (960 aa).

At Lys709 the chain carries N6-(pyridoxal phosphate)lysine.

It belongs to the GcvP family. The glycine cleavage system is composed of four proteins: P, T, L and H. It depends on pyridoxal 5'-phosphate as a cofactor.

The enzyme catalyses N(6)-[(R)-lipoyl]-L-lysyl-[glycine-cleavage complex H protein] + glycine + H(+) = N(6)-[(R)-S(8)-aminomethyldihydrolipoyl]-L-lysyl-[glycine-cleavage complex H protein] + CO2. Functionally, the glycine cleavage system catalyzes the degradation of glycine. The P protein binds the alpha-amino group of glycine through its pyridoxal phosphate cofactor; CO(2) is released and the remaining methylamine moiety is then transferred to the lipoamide cofactor of the H protein. The protein is Glycine dehydrogenase (decarboxylating) of Edwardsiella ictaluri (strain 93-146).